A 223-amino-acid chain; its full sequence is Sigma non-opioid intracellular receptor 1 (223 aa).

Residues 1–9 (MPWAVGRRW) lie on the Lumenal side of the membrane. Residues 2–8 (PWAVGRR) form a targeting to endoplasmic reticulum-associated lipid droplets region. Residues 10–30 (AWITLFLTIVAVLIQAVWLWL) form a helical membrane-spanning segment. The Cytoplasmic portion of the chain corresponds to 31–223 (GTQSFVFQRE…LTTYLFGQDP (193 aa)). The tract at residues 99 to 106 (SLSEYVLL) is important for ligand-binding. The interval 177 to 223 (VIPSTLAFALSDTIFSTQDFLTLFYTLRAYARGLRLELTTYLFGQDP) is C-terminal hydrophobic region.

Belongs to the ERG2 family. Homotrimer. Interacts with KCNA2; cocaine consumption leads to increased interaction. Forms a ternary complex with ANK2 and ITPR3. The complex is disrupted by agonists. Interacts with KCNA4. Interacts with RNF112 in an oxidative stress-regulated manner. As to expression, expressed in ependymocytes and neurons throughout the CNS from the olfactory bulb to the spinal cord. Expressed by progenitor, mature and satellite oligodendrocytes and by Schwann cells (at protein level). Expressed in liver, intestine, kidney, brain, lung and heart. Expressed by retinal cells.

Its subcellular location is the nucleus inner membrane. The protein resides in the nucleus outer membrane. The protein localises to the nucleus envelope. It is found in the cytoplasmic vesicle. It localises to the endoplasmic reticulum membrane. Its subcellular location is the membrane. The protein resides in the lipid droplet. The protein localises to the cell junction. It is found in the cell membrane. It localises to the cell projection. Its subcellular location is the growth cone. The protein resides in the postsynaptic density membrane. Functionally, functions in lipid transport from the endoplasmic reticulum and is involved in a wide array of cellular functions probably through regulation of the biogenesis of lipid microdomains at the plasma membrane. Involved in the regulation of different receptors it plays a role in BDNF signaling and EGF signaling. Also regulates ion channels like the potassium channel and could modulate neurotransmitter release. Plays a role in calcium signaling through modulation together with ANK2 of the ITP3R-dependent calcium efflux at the endoplasmic reticulum. Plays a role in several other cell functions including proliferation, survival and death. Originally identified for its ability to bind various psychoactive drugs it is involved in learning processes, memory and mood alteration. Necessary for proper mitochondrial axonal transport in motor neurons, in particular the retrograde movement of mitochondria. Plays a role in protecting cells against oxidative stress-induced cell death via its interaction with RNF112. The chain is Sigma non-opioid intracellular receptor 1 (Sigmar1) from Rattus norvegicus (Rat).